The sequence spans 175 residues: Peptide deformylase (175 aa).

Cysteine 99 and histidine 141 together coordinate Fe cation. Residue glutamate 142 is part of the active site. Residue histidine 145 participates in Fe cation binding.

The protein belongs to the polypeptide deformylase family. Requires Fe(2+) as cofactor.

The enzyme catalyses N-terminal N-formyl-L-methionyl-[peptide] + H2O = N-terminal L-methionyl-[peptide] + formate. In terms of biological role, removes the formyl group from the N-terminal Met of newly synthesized proteins. Requires at least a dipeptide for an efficient rate of reaction. N-terminal L-methionine is a prerequisite for activity but the enzyme has broad specificity at other positions. The protein is Peptide deformylase of Rickettsia typhi (strain ATCC VR-144 / Wilmington).